A 304-amino-acid polypeptide reads, in one-letter code: MADFDINILGCGSALPTTRHLATSQIVDLRDKLYMIDCGEGTQVQMRRMRIKFSRLNHIFISHLHGDHCFGLPGLISTLGMLGRNGELVIHGPKEIESYMRPVLDIFCKGLPYEIRFNLIDPTTHSLVMEDRSLSVYSIPLKHRIPCCGYLFAEKAKEAHIIREMTDFYQVPVRMMQEIKRGADFVTPEGEVIPNARLTRPAVAPKRYAYCSDTAFHPSIIPIIEGVDLLYHEATFAECDAARAKETFHSTARQAAEIAYKAQVKRLVIGHYSARYEDMAPLKKEADKIFPGTILGEEGMRLSV.

His63, His65, Asp67, His68, His143, Asp213, and His271 together coordinate Zn(2+). The active-site Proton acceptor is Asp67.

This sequence belongs to the RNase Z family. In terms of assembly, homodimer. Zn(2+) is required as a cofactor.

The catalysed reaction is Endonucleolytic cleavage of RNA, removing extra 3' nucleotides from tRNA precursor, generating 3' termini of tRNAs. A 3'-hydroxy group is left at the tRNA terminus and a 5'-phosphoryl group is left at the trailer molecule.. Its function is as follows. Zinc phosphodiesterase, which displays some tRNA 3'-processing endonuclease activity. Probably involved in tRNA maturation, by removing a 3'-trailer from precursor tRNA. In Parabacteroides distasonis (strain ATCC 8503 / DSM 20701 / CIP 104284 / JCM 5825 / NCTC 11152), this protein is Ribonuclease Z.